The primary structure comprises 1462 residues: DNA topoisomerase 2 (1462 aa).

Residues N79, N108, 136 to 138 (SSN), and 149 to 156 (GRNGYGAK) each bind ATP. An interaction with DNA region spans residues 332–334 (NKK). Residue 365-367 (QTK) participates in ATP binding. A Toprim domain is found at 442-556 (CTLILTEGDS…SLLKVPSFLV (115 aa)). Residues E448, D525, and D527 each coordinate Mg(2+). One can recognise a Topo IIA-type catalytic domain in the interval 671–1131 (KDFVNKELIL…PTTSLWLKDL (461 aa)). Y761 acts as the O-(5'-phospho-DNA)-tyrosine intermediate in catalysis. The segment at 947 to 956 (KLTSTISTSN) is interaction with DNA. Disordered regions lie at residues 1040–1077 (PMPR…SVSV) and 1147–1462 (EDDR…EDDD). Residues 1056–1068 (NDDDSEEQEDAEP) show a composition bias toward acidic residues. Basic residues predominate over residues 1167–1181 (PAKKPPQPRKNTKKA). The span at 1198-1207 (AVEAAKPAEV) shows a compositional bias: low complexity. Residues 1240 to 1250 (IESSGEKSQAM) show a composition bias toward polar residues. Residues 1260-1275 (AGKKQNNKRGGAKKKS) show a composition bias toward basic residues. A compositionally biased stretch (acidic residues) spans 1282–1300 (SDSDNEVNDVDDDDDDFEE). Low complexity-rich tracts occupy residues 1314 to 1334 (KPAA…APAA) and 1419 to 1430 (APQPARARPQRA). The span at 1442–1462 (SESEEDSDEDAELSDFEEDDD) shows a compositional bias: acidic residues.

This sequence belongs to the type II topoisomerase family. In terms of assembly, homodimer. Mg(2+) serves as cofactor. Requires Mn(2+) as cofactor. It depends on Ca(2+) as a cofactor. As to expression, abundant in proliferative tissues.

The enzyme catalyses ATP-dependent breakage, passage and rejoining of double-stranded DNA.. In terms of biological role, control of topological states of DNA by transient breakage and subsequent rejoining of DNA strands. Topoisomerase II makes double-strand breaks. The sequence is that of DNA topoisomerase 2 (TOP2) from Pisum sativum (Garden pea).